The following is a 383-amino-acid chain: Dual-specificity RNA methyltransferase RlmN (383 aa).

Catalysis depends on E94, which acts as the Proton acceptor. Positions 100–339 constitute a Radical SAM core domain; that stretch reads DGDRATLCVS…VTVRRTRGDD (240 aa). The cysteines at positions 107 and 344 are disulfide-linked. [4Fe-4S] cluster contacts are provided by C114, C118, and C121. Residues 168–169, S200, 222–224, and N301 contribute to the S-adenosyl-L-methionine site; these read GE and SLH. C344 serves as the catalytic S-methylcysteine intermediate.

It belongs to the radical SAM superfamily. RlmN family. [4Fe-4S] cluster is required as a cofactor.

The protein localises to the cytoplasm. It catalyses the reaction adenosine(2503) in 23S rRNA + 2 reduced [2Fe-2S]-[ferredoxin] + 2 S-adenosyl-L-methionine = 2-methyladenosine(2503) in 23S rRNA + 5'-deoxyadenosine + L-methionine + 2 oxidized [2Fe-2S]-[ferredoxin] + S-adenosyl-L-homocysteine. It carries out the reaction adenosine(37) in tRNA + 2 reduced [2Fe-2S]-[ferredoxin] + 2 S-adenosyl-L-methionine = 2-methyladenosine(37) in tRNA + 5'-deoxyadenosine + L-methionine + 2 oxidized [2Fe-2S]-[ferredoxin] + S-adenosyl-L-homocysteine. Functionally, specifically methylates position 2 of adenine 2503 in 23S rRNA and position 2 of adenine 37 in tRNAs. m2A2503 modification seems to play a crucial role in the proofreading step occurring at the peptidyl transferase center and thus would serve to optimize ribosomal fidelity. The protein is Dual-specificity RNA methyltransferase RlmN of Aliivibrio salmonicida (strain LFI1238) (Vibrio salmonicida (strain LFI1238)).